A 363-amino-acid polypeptide reads, in one-letter code: tRNA dimethylallyltransferase (363 aa).

Positions 1–55 are unknown insert; it reads MLACNDDTSLYLLVKQVTKKEIYSNDLENGNVKRGASMQSLYLIGDPKCCRNNSS. ATP is bound at residue 65–72; it reads GPTASGKS. Residue 67 to 72 coordinates substrate; sequence TASGKS. 2 interaction with substrate tRNA regions span residues 90–93 and 214–218; these read DSMQ and QRLIR.

The protein belongs to the IPP transferase family. Monomer. Mg(2+) serves as cofactor.

The enzyme catalyses adenosine(37) in tRNA + dimethylallyl diphosphate = N(6)-dimethylallyladenosine(37) in tRNA + diphosphate. Its function is as follows. Catalyzes the transfer of a dimethylallyl group onto the adenine at position 37 in tRNAs that read codons beginning with uridine, leading to the formation of N6-(dimethylallyl)adenosine (i(6)A). This is tRNA dimethylallyltransferase from Rickettsia conorii (strain ATCC VR-613 / Malish 7).